The primary structure comprises 848 residues: DNA mismatch repair protein MutS (848 aa).

An ATP-binding site is contributed by 605–612 (GPNMAGKS).

The protein belongs to the DNA mismatch repair MutS family.

Its function is as follows. This protein is involved in the repair of mismatches in DNA. It is possible that it carries out the mismatch recognition step. This protein has a weak ATPase activity. This Leptospira interrogans serogroup Icterohaemorrhagiae serovar copenhageni (strain Fiocruz L1-130) protein is DNA mismatch repair protein MutS.